A 327-amino-acid polypeptide reads, in one-letter code: Phenylalanine--tRNA ligase alpha subunit (327 aa).

Glutamate 252 is a Mg(2+) binding site.

It belongs to the class-II aminoacyl-tRNA synthetase family. Phe-tRNA synthetase alpha subunit type 1 subfamily. As to quaternary structure, tetramer of two alpha and two beta subunits. Mg(2+) serves as cofactor.

It localises to the cytoplasm. The catalysed reaction is tRNA(Phe) + L-phenylalanine + ATP = L-phenylalanyl-tRNA(Phe) + AMP + diphosphate + H(+). This is Phenylalanine--tRNA ligase alpha subunit from Vibrio campbellii (strain ATCC BAA-1116).